Consider the following 525-residue polypeptide: GMP synthase [glutamine-hydrolyzing] (525 aa).

The region spanning 9-207 (RILILDFGSQ…VLDICGCDAL (199 aa)) is the Glutamine amidotransferase type-1 domain. Cys-86 (nucleophile) is an active-site residue. Active-site residues include His-181 and Glu-183. The GMPS ATP-PPase domain maps to 208-400 (WTSAAIIEDT…LGLPYDMLYR (193 aa)). 235-241 (SGGVDSS) serves as a coordination point for ATP.

In terms of assembly, homodimer.

It carries out the reaction XMP + L-glutamine + ATP + H2O = GMP + L-glutamate + AMP + diphosphate + 2 H(+). The protein operates within purine metabolism; GMP biosynthesis; GMP from XMP (L-Gln route): step 1/1. Functionally, catalyzes the synthesis of GMP from XMP. The polypeptide is GMP synthase [glutamine-hydrolyzing] (Proteus mirabilis (strain HI4320)).